The chain runs to 321 residues: G-protein coupled receptor homolog ECRF3 (321 aa).

The Extracellular portion of the chain corresponds to 1-34 (MEVKLDFSSEDFSNYSYNYSGDIYYGDVAPCVVN). Asparagine 14 and asparagine 18 each carry an N-linked (GlcNAc...) asparagine; by host glycan. A helical membrane pass occupies residues 35–51 (FLISESALAFIYVLMFL). Topologically, residues 52–76 (CNAIGNSLVLRTFLKYRAQAQSFDY) are cytoplasmic. A helical membrane pass occupies residues 77–93 (LMMGFCLNSLFLAGYLL). Residues 94–124 (MRLLRMFEIFMNTELCKLEAFFLNLSIYWSP) lie on the Extracellular side of the membrane. Asparagine 117 carries N-linked (GlcNAc...) asparagine; by host glycosylation. Residues 125-141 (FILVFISVLRCLLIFCA) form a helical membrane-spanning segment. The Cytoplasmic portion of the chain corresponds to 142–149 (TRLWVKKT). Residues 150–166 (LIGQVFLCCSFVLACFG) form a helical membrane-spanning segment. At 167 to 196 (ALPHVMVTSYYEPSSCIEEDGVLTEQLRTK) the chain is on the extracellular side. Residues 197–215 (LNTFHTWYSFAGPLFITVI) traverse the membrane as a helical segment. Residues 216-234 (CYSMSCYKLFKTKLSKRAE) lie on the Cytoplasmic side of the membrane. A helical membrane pass occupies residues 235 to 251 (VVTIITMTTLLFIVFCI). The Extracellular portion of the chain corresponds to 252 to 286 (PYYIMESIDTLLRVGVIEETCAKRSAIVYGIQCTY). The helical transmembrane segment at 287 to 303 (MLLVLYYCMLPLMFAMF) threads the bilayer. Residues 304–321 (GSLFRQRMAAWCKTICHC) are Cytoplasmic-facing.

This sequence belongs to the G-protein coupled receptor 1 family.

It localises to the host cell membrane. In terms of biological role, may be highly relevant to the process of cellular transformation and rapid T-cell proliferation effected by HVS during latent infections of T-cells in susceptible hosts. This is G-protein coupled receptor homolog ECRF3 (74) from Saimiri sciureus (Common squirrel monkey).